An 876-amino-acid chain; its full sequence is DNA topoisomerase 1 (876 aa).

One can recognise a Toprim domain in the interval 3-150; the sequence is KSLVIVESPA…RYKRVVFNEI (148 aa). Residue E9 coordinates Mg(2+). Residues 37–69 form a disordered region; that stretch reads LPTAGQTATPTGKAAAASTKKASTTDKEQQKRE. Over residues 38–58 the composition is skewed to low complexity; sequence PTAGQTATPTGKAAAASTKKA. A compositionally biased stretch (basic and acidic residues) spans 59 to 69; it reads STTDKEQQKRE. Mg(2+) is bound at residue D119. The region spanning 166-582 is the Topo IA-type catalytic domain; sequence NMDGVNAQQA…EFFADFSRDL (417 aa). The interval 200–205 is interaction with DNA; that stretch reads SAGRVQ. The active-site O-(5'-phospho-DNA)-tyrosine intermediate is Y327. 2 C4-type zinc fingers span residues 668-695 and 717-742; these read CPIC…NPNC and CDKC…NDAC.

It belongs to the type IA topoisomerase family. As to quaternary structure, monomer. Requires Mg(2+) as cofactor.

The catalysed reaction is ATP-independent breakage of single-stranded DNA, followed by passage and rejoining.. Functionally, releases the supercoiling and torsional tension of DNA, which is introduced during the DNA replication and transcription, by transiently cleaving and rejoining one strand of the DNA duplex. Introduces a single-strand break via transesterification at a target site in duplex DNA. The scissile phosphodiester is attacked by the catalytic tyrosine of the enzyme, resulting in the formation of a DNA-(5'-phosphotyrosyl)-enzyme intermediate and the expulsion of a 3'-OH DNA strand. The free DNA strand then undergoes passage around the unbroken strand, thus removing DNA supercoils. Finally, in the religation step, the DNA 3'-OH attacks the covalent intermediate to expel the active-site tyrosine and restore the DNA phosphodiester backbone. The sequence is that of DNA topoisomerase 1 from Vibrio cholerae serotype O1 (strain ATCC 39315 / El Tor Inaba N16961).